Consider the following 270-residue polypeptide: Release factor glutamine methyltransferase (270 aa).

Residues 112–116 (GTGSG), Asp135, Trp162, and Asn178 each bind S-adenosyl-L-methionine. A substrate-binding site is contributed by 178 to 181 (NPPY).

It belongs to the protein N5-glutamine methyltransferase family. PrmC subfamily.

The catalysed reaction is L-glutaminyl-[peptide chain release factor] + S-adenosyl-L-methionine = N(5)-methyl-L-glutaminyl-[peptide chain release factor] + S-adenosyl-L-homocysteine + H(+). In terms of biological role, methylates the class 1 translation termination release factors RF1/PrfA and RF2/PrfB on the glutamine residue of the universally conserved GGQ motif. This chain is Release factor glutamine methyltransferase, found in Bordetella pertussis (strain Tohama I / ATCC BAA-589 / NCTC 13251).